The sequence spans 931 residues: Protein unc-45 homolog B (931 aa).

TPR repeat units follow at residues 6–39 (AVQL…TKDK), 43–76 (ATLY…NSSD), and 77–110 (IKAL…EPRN). ARM repeat units follow at residues 169 to 208 (EAGA…GMCS), 211 to 250 (QARA…AIID), and 751 to 790 (DKLR…NMVL).

In terms of assembly, interacts with HSP90 in an ATP-independent manner. Interacts with UBE4B; the interaction may target UNC45B for proteasomal degradation. Expressed in eye lens tissues. Expressed in muscle (at protein level).

It localises to the cytoplasm. Its subcellular location is the myofibril. It is found in the sarcomere. The protein resides in the z line. The protein localises to the a band. It localises to the perinuclear region. Its subcellular location is the cytosol. Acts as a co-chaperone for HSP90 and is required for proper folding of the myosin motor domain. Plays a role in sarcomere formation during muscle cell development. Is necessary for normal early lens development. In Homo sapiens (Human), this protein is Protein unc-45 homolog B.